Here is a 267-residue protein sequence, read N- to C-terminus: Undecaprenyl-diphosphatase (267 aa).

The next 8 helical transmembrane spans lie at 1-21 (MTYF…FLPI), 39-59 (QGLA…VMYF), 87-107 (WLII…KDFI), 111-131 (LRSA…LWWV), 149-169 (ALFL…RSGI), 189-209 (FLMS…KLAL), 218-238 (FLGT…HFFL), and 246-266 (MTPF…WLAL).

This sequence belongs to the UppP family.

The protein resides in the cell inner membrane. The enzyme catalyses di-trans,octa-cis-undecaprenyl diphosphate + H2O = di-trans,octa-cis-undecaprenyl phosphate + phosphate + H(+). Catalyzes the dephosphorylation of undecaprenyl diphosphate (UPP). Confers resistance to bacitracin. This is Undecaprenyl-diphosphatase from Aliivibrio salmonicida (strain LFI1238) (Vibrio salmonicida (strain LFI1238)).